Here is a 269-residue protein sequence, read N- to C-terminus: Signal recognition particle receptor subunit beta (269 aa).

A helical membrane pass occupies residues 35 to 55 (LLSVAVAVLAVLLTLVFWKFI). GTP contacts are provided by residues 69–77 (GLCDSGKTL) and 90–93 (TQTS). Serine 110 is subject to Phosphoserine. Residue glycine 118 participates in GTP binding. A Phosphothreonine modification is found at threonine 212. Alanine 246 contributes to the GTP binding site.

The protein belongs to the SRP receptor beta subunit family. Heterodimer with SRPRA.

The protein localises to the endoplasmic reticulum membrane. Functionally, component of the signal recognition particle (SRP) complex receptor (SR). Ensures, in conjunction with the SRP complex, the correct targeting of the nascent secretory proteins to the endoplasmic reticulum membrane system. May mediate the membrane association of SR. The chain is Signal recognition particle receptor subunit beta (Srprb) from Rattus norvegicus (Rat).